Reading from the N-terminus, the 283-residue chain is Phosphate import ATP-binding protein PstB 1 (283 aa).

Positions 1–16 are enriched in acidic residues; it reads MSSDDTTDPTADDESF. Residues 1 to 35 form a disordered region; that stretch reads MSSDDTTDPTADDESFTDSPVAGLEQSTTTRGSGR. The region spanning 38 to 278 is the ABC transporter domain; it reads ISARNINVWY…PSSERVENYI (241 aa). 70-77 contributes to the ATP binding site; the sequence is GPSGCGKS.

It belongs to the ABC transporter superfamily. Phosphate importer (TC 3.A.1.7) family. The complex is composed of two ATP-binding proteins (PstB), two transmembrane proteins (PstC and PstA) and a solute-binding protein (PstS).

Its subcellular location is the cell membrane. The catalysed reaction is phosphate(out) + ATP + H2O = ADP + 2 phosphate(in) + H(+). Its function is as follows. Part of the ABC transporter complex PstSACB involved in phosphate import. Responsible for energy coupling to the transport system. In Natronomonas pharaonis (strain ATCC 35678 / DSM 2160 / CIP 103997 / JCM 8858 / NBRC 14720 / NCIMB 2260 / Gabara) (Halobacterium pharaonis), this protein is Phosphate import ATP-binding protein PstB 1.